The chain runs to 259 residues: Leucine-rich repeat-containing protein 3B (259 aa).

Residues 1 to 33 (MNLVDLWLSRSLSMCLLLQSFVLMILCFHSASM) form the signal peptide. The region spanning 34-64 (CPKGCLCSSSGGLNVTCSNANLKEIPRDLPP) is the LRRNT domain. Asn-47 carries N-linked (GlcNAc...) asparagine glycosylation. 3 LRR repeats span residues 65-86 (ETVL…IFKD), 89-110 (QLRV…AFKG), and 114-135 (TLQT…AFNN). N-linked (GlcNAc...) asparagine glycosylation occurs at Asn-94. Residues 145–197 (NPWHCDCTLQQVLRSMASNHETAHNVICKTSVLDEHAGRPFLNAANDADLCNL) enclose the LRRCT domain. A helical transmembrane segment spans residues 205-225 (AMLVTMFGWFTMVISYVVYYV).

Belongs to the LRRC3 family.

The protein localises to the membrane. In Mus musculus (Mouse), this protein is Leucine-rich repeat-containing protein 3B (Lrrc3b).